The following is a 332-amino-acid chain: Trans-2'-carboxybenzalpyruvate hydratase-aldolase (332 aa).

Catalysis depends on lysine 178, which acts as the Schiff-base intermediate with substrate.

This sequence belongs to the DapA family. Homotrimer.

The catalysed reaction is (3Z)-4-(2-carboxyphenyl)-2-oxobut-3-enoate + H2O = 2-formylbenzoate + pyruvate. Its activity is regulated as follows. Not inhibited by sodium borohydride or sodium pyruvate. Unaffected by EDTA, EGTA, Mn(2+), Mg(2+) and Ca(2+). Functionally, plays a role in phenanthrene catabolism. Catalyzes the transformation of trans-2'-carboxbenzalpyruvate to 2-formylbenzoate and pyruvate. In Nocardioides sp. (strain KP7), this protein is Trans-2'-carboxybenzalpyruvate hydratase-aldolase.